Here is a 331-residue protein sequence, read N- to C-terminus: DNA-directed RNA polymerase subunit alpha (331 aa).

Residues Met-1–Asn-226 are alpha N-terminal domain (alpha-NTD). Residues Leu-243–Asn-331 form an alpha C-terminal domain (alpha-CTD) region.

The protein belongs to the RNA polymerase alpha chain family. Homodimer. The RNAP catalytic core consists of 2 alpha, 1 beta, 1 beta' and 1 omega subunit. When a sigma factor is associated with the core the holoenzyme is formed, which can initiate transcription.

It carries out the reaction RNA(n) + a ribonucleoside 5'-triphosphate = RNA(n+1) + diphosphate. In terms of biological role, DNA-dependent RNA polymerase catalyzes the transcription of DNA into RNA using the four ribonucleoside triphosphates as substrates. The chain is DNA-directed RNA polymerase subunit alpha from Clavibacter michiganensis subsp. michiganensis (strain NCPPB 382).